The chain runs to 365 residues: Outer membrane protein assembly factor BamC (365 aa).

Residues 1-16 (MLKKVTPLFLVAAVAA) form the signal peptide. The N-palmitoyl cysteine moiety is linked to residue C17. C17 carries S-diacylglycerol cysteine lipidation.

Belongs to the BamC family. In terms of assembly, part of the Bam complex.

The protein localises to the cell outer membrane. Functionally, part of the outer membrane protein assembly complex, which is involved in assembly and insertion of beta-barrel proteins into the outer membrane. This is Outer membrane protein assembly factor BamC from Shewanella oneidensis (strain ATCC 700550 / JCM 31522 / CIP 106686 / LMG 19005 / NCIMB 14063 / MR-1).